The primary structure comprises 312 residues: tRNA-dihydrouridine(16) synthase (312 aa).

FMN-binding positions include 7-9 (PME) and Gln68. The active-site Proton donor is the Cys98. FMN-binding positions include Lys139, 200-202 (NGE), and 224-225 (GR).

This sequence belongs to the Dus family. DusC subfamily. It depends on FMN as a cofactor.

It carries out the reaction 5,6-dihydrouridine(16) in tRNA + NADP(+) = uridine(16) in tRNA + NADPH + H(+). The catalysed reaction is 5,6-dihydrouridine(16) in tRNA + NAD(+) = uridine(16) in tRNA + NADH + H(+). Catalyzes the synthesis of 5,6-dihydrouridine (D), a modified base found in the D-loop of most tRNAs, via the reduction of the C5-C6 double bond in target uridines. Specifically modifies U16 in tRNAs. In Yersinia pestis, this protein is tRNA-dihydrouridine(16) synthase.